The primary structure comprises 75 residues: Large ribosomal subunit protein uL30 (75 aa).

It belongs to the universal ribosomal protein uL30 family. Part of the 50S ribosomal subunit.

The protein is Large ribosomal subunit protein uL30 of Roseiflexus castenholzii (strain DSM 13941 / HLO8).